A 105-amino-acid chain; its full sequence is Large ribosomal subunit protein uL24 (105 aa).

This sequence belongs to the universal ribosomal protein uL24 family. Part of the 50S ribosomal subunit.

Functionally, one of two assembly initiator proteins, it binds directly to the 5'-end of the 23S rRNA, where it nucleates assembly of the 50S subunit. One of the proteins that surrounds the polypeptide exit tunnel on the outside of the subunit. The polypeptide is Large ribosomal subunit protein uL24 (Mycobacterium sp. (strain JLS)).